A 501-amino-acid chain; its full sequence is Proline--tRNA ligase (501 aa).

The protein belongs to the class-II aminoacyl-tRNA synthetase family. ProS type 3 subfamily. In terms of assembly, homodimer.

It localises to the cytoplasm. It carries out the reaction tRNA(Pro) + L-proline + ATP = L-prolyl-tRNA(Pro) + AMP + diphosphate. Its function is as follows. Catalyzes the attachment of proline to tRNA(Pro) in a two-step reaction: proline is first activated by ATP to form Pro-AMP and then transferred to the acceptor end of tRNA(Pro). The sequence is that of Proline--tRNA ligase from Halobacterium salinarum (strain ATCC 29341 / DSM 671 / R1).